A 351-amino-acid chain; its full sequence is Photosystem II D2 protein (351 aa).

The chain crosses the membrane as a helical span at residues 39 to 59 (TAYLAIGGWLTGTTFVTSWYT). His-116 is a binding site for chlorophyll a. The helical transmembrane segment at 123–139 (GFMLRQFEIARLVGIRP) threads the bilayer. Residues Gln-128 and Asn-141 each coordinate pheophytin a. The chain crosses the membrane as a helical span at residues 151–164 (VFVSVFLMYPLGQS). Position 196 (His-196) interacts with chlorophyll a. A helical membrane pass occupies residues 206 to 226 (GALLCAIHGATVENTLFEDGE). The a plastoquinone site is built by His-213 and Phe-260. His-213 contacts Fe cation. His-267 contacts Fe cation. Residues 277–293 (GLWTSSIGIIGLALNLR) traverse the membrane as a helical segment.

The protein belongs to the reaction center PufL/M/PsbA/D family. PSII is composed of 1 copy each of membrane proteins PsbA, PsbB, PsbC, PsbD, PsbE, PsbF, PsbH, PsbI, PsbJ, PsbK, PsbL, PsbM, PsbT, PsbX, PsbY, PsbZ, Psb30/Ycf12, peripheral proteins PsbO, CyanoQ (PsbQ), PsbU, PsbV and a large number of cofactors. It forms dimeric complexes. It depends on The D1/D2 heterodimer binds P680, chlorophylls that are the primary electron donor of PSII, and subsequent electron acceptors. It shares a non-heme iron and each subunit binds pheophytin, quinone, additional chlorophylls, carotenoids and lipids. There is also a Cl(-1) ion associated with D1 and D2, which is required for oxygen evolution. The PSII complex binds additional chlorophylls, carotenoids and specific lipids. as a cofactor.

The protein localises to the cellular thylakoid membrane. It carries out the reaction 2 a plastoquinone + 4 hnu + 2 H2O = 2 a plastoquinol + O2. Photosystem II (PSII) is a light-driven water:plastoquinone oxidoreductase that uses light energy to abstract electrons from H(2)O, generating O(2) and a proton gradient subsequently used for ATP formation. It consists of a core antenna complex that captures photons, and an electron transfer chain that converts photonic excitation into a charge separation. The D1/D2 (PsbA/PsbD) reaction center heterodimer binds P680, the primary electron donor of PSII as well as several subsequent electron acceptors. D2 is needed for assembly of a stable PSII complex. The chain is Photosystem II D2 protein from Synechococcus sp. (strain WH7803).